The primary structure comprises 711 residues: Ribosomal RNA large subunit methyltransferase K/L (711 aa).

Residues 43–154 (LGYRITLWSR…RGEITIGINF (112 aa)) form the THUMP domain.

Belongs to the methyltransferase superfamily. RlmKL family.

Its subcellular location is the cytoplasm. It carries out the reaction guanosine(2445) in 23S rRNA + S-adenosyl-L-methionine = N(2)-methylguanosine(2445) in 23S rRNA + S-adenosyl-L-homocysteine + H(+). The catalysed reaction is guanosine(2069) in 23S rRNA + S-adenosyl-L-methionine = N(2)-methylguanosine(2069) in 23S rRNA + S-adenosyl-L-homocysteine + H(+). Its function is as follows. Specifically methylates the guanine in position 2445 (m2G2445) and the guanine in position 2069 (m7G2069) of 23S rRNA. The polypeptide is Ribosomal RNA large subunit methyltransferase K/L (Shewanella pealeana (strain ATCC 700345 / ANG-SQ1)).